The following is a 925-amino-acid chain: Isoleucine--tRNA ligase (925 aa).

The 'HIGH' region signature appears at 57 to 67 (PYANGDIHMGH). Glutamate 556 lines the L-isoleucyl-5'-AMP pocket. Positions 597–601 (KMSKS) match the 'KMSKS' region motif. An ATP-binding site is contributed by lysine 600. Cysteine 890, cysteine 893, cysteine 910, and cysteine 913 together coordinate Zn(2+).

It belongs to the class-I aminoacyl-tRNA synthetase family. IleS type 1 subfamily. In terms of assembly, monomer. Zn(2+) serves as cofactor.

The protein localises to the cytoplasm. It catalyses the reaction tRNA(Ile) + L-isoleucine + ATP = L-isoleucyl-tRNA(Ile) + AMP + diphosphate. Its function is as follows. Catalyzes the attachment of isoleucine to tRNA(Ile). As IleRS can inadvertently accommodate and process structurally similar amino acids such as valine, to avoid such errors it has two additional distinct tRNA(Ile)-dependent editing activities. One activity is designated as 'pretransfer' editing and involves the hydrolysis of activated Val-AMP. The other activity is designated 'posttransfer' editing and involves deacylation of mischarged Val-tRNA(Ile). This Carboxydothermus hydrogenoformans (strain ATCC BAA-161 / DSM 6008 / Z-2901) protein is Isoleucine--tRNA ligase.